Consider the following 158-residue polypeptide: Phosphopantetheine adenylyltransferase (158 aa).

Residue serine 9 coordinates substrate. ATP is bound by residues 9–10 (SF) and histidine 17. The substrate site is built by lysine 41, valine 73, and lysine 87. Residues 88 to 90 (GLR), glutamate 98, and 122 to 128 (YSFVSSS) each bind ATP.

The protein belongs to the bacterial CoaD family. In terms of assembly, homohexamer. The cofactor is Mg(2+).

It localises to the cytoplasm. The enzyme catalyses (R)-4'-phosphopantetheine + ATP + H(+) = 3'-dephospho-CoA + diphosphate. Its pathway is cofactor biosynthesis; coenzyme A biosynthesis; CoA from (R)-pantothenate: step 4/5. Reversibly transfers an adenylyl group from ATP to 4'-phosphopantetheine, yielding dephospho-CoA (dPCoA) and pyrophosphate. The sequence is that of Phosphopantetheine adenylyltransferase from Mycolicibacterium smegmatis (strain ATCC 700084 / mc(2)155) (Mycobacterium smegmatis).